The following is a 274-amino-acid chain: Rhamnulose-1-phosphate aldolase (274 aa).

Residue Glu-117 is part of the active site. Zn(2+)-binding residues include His-141, His-143, and His-212.

Belongs to the aldolase class II family. RhaD subfamily. Homotetramer. Requires Zn(2+) as cofactor.

The protein resides in the cytoplasm. The catalysed reaction is L-rhamnulose 1-phosphate = (S)-lactaldehyde + dihydroxyacetone phosphate. It participates in carbohydrate degradation; L-rhamnose degradation; glycerone phosphate from L-rhamnose: step 3/3. Functionally, catalyzes the reversible cleavage of L-rhamnulose-1-phosphate to dihydroxyacetone phosphate (DHAP) and L-lactaldehyde. The chain is Rhamnulose-1-phosphate aldolase from Escherichia fergusonii (strain ATCC 35469 / DSM 13698 / CCUG 18766 / IAM 14443 / JCM 21226 / LMG 7866 / NBRC 102419 / NCTC 12128 / CDC 0568-73).